Here is a 316-residue protein sequence, read N- to C-terminus: BTB/POZ domain-containing adapter for CUL3-mediated RhoA degradation protein 2 (316 aa).

The 69-residue stretch at 28–96 folds into the BTB domain; that stretch reads KYVQLNVGGS…LRDDTITLPQ (69 aa). The span at 268–279 shows a compositional bias: polar residues; it reads EATSRSRSQASP. The segment at 268-288 is disordered; sequence EATSRSRSQASPSEDEDTFEL. A Phosphoserine modification is found at Ser278. Ser280 carries the post-translational modification Phosphoserine; by CK2.

It belongs to the BACURD family. In terms of assembly, component of the BCR(TNFAIP1) E3 ubiquitin ligase complex, at least composed of CUL3, TNFAIP1/BACURD2 and RBX1. Interacts with RHOA; with a preference for RhoA-GDP. Interacts with RHOB. Interacts with PCNA. Interacts with CSNK2B. Phosphorylation at Ser-280 by CK2 facilitates the nucleus localization and increases interaction with PCNA.

It localises to the cytoplasm. The protein localises to the nucleus. The protein resides in the endosome. It participates in protein modification; protein ubiquitination. In terms of biological role, substrate-specific adapter of a BCR (BTB-CUL3-RBX1) E3 ubiquitin-protein ligase complex involved in regulation of cytoskeleton structure. The BCR(TNFAIP1) E3 ubiquitin ligase complex mediates the ubiquitination of RHOA, leading to its degradation by the proteasome, thereby regulating the actin cytoskeleton and cell migration. Its interaction with RHOB may regulate apoptosis. May enhance the PCNA-dependent DNA polymerase delta activity. The sequence is that of BTB/POZ domain-containing adapter for CUL3-mediated RhoA degradation protein 2 (Tnfaip1) from Mus musculus (Mouse).